The following is a 94-amino-acid chain: Cell division protein FtsB (94 aa).

The Cytoplasmic portion of the chain corresponds to 1–3; sequence MRT. Residues 4-21 form a helical membrane-spanning segment; that stretch reads FAIFLLIALGWLQYTLWF. Residues 22-94 are Periplasmic-facing; that stretch reads GKNGMSDYAQ…YRIIDENSEG (73 aa). A coiled-coil region spans residues 33–71; it reads SNDVALQEEVNQGLRNRNEQMFAEIDDLKKGSEAIEERA.

The protein belongs to the FtsB family. Part of a complex composed of FtsB, FtsL and FtsQ.

The protein resides in the cell inner membrane. Essential cell division protein. May link together the upstream cell division proteins, which are predominantly cytoplasmic, with the downstream cell division proteins, which are predominantly periplasmic. The polypeptide is Cell division protein FtsB (Aliivibrio fischeri (strain ATCC 700601 / ES114) (Vibrio fischeri)).